Here is a 209-residue protein sequence, read N- to C-terminus: Large ribosomal subunit protein uL3 (209 aa).

Positions 118–150 are disordered; sequence GFQGAIKRHGQSRGPMTHGSRYHRRPGSMGPVD.

The protein belongs to the universal ribosomal protein uL3 family. In terms of assembly, part of the 50S ribosomal subunit. Forms a cluster with proteins L14 and L19.

One of the primary rRNA binding proteins, it binds directly near the 3'-end of the 23S rRNA, where it nucleates assembly of the 50S subunit. This chain is Large ribosomal subunit protein uL3, found in Bacillus pumilus (strain SAFR-032).